The sequence spans 32 residues: Protamine-3A (32 aa).

A disordered region spans residues 1-32; that stretch reads PRRRRRSSSRPIRRRRRPRVSRRRRRGGRRRR.

Testis.

The protein resides in the nucleus. It localises to the chromosome. In terms of biological role, protamines substitute for histones in the chromatin of sperm during the haploid phase of spermatogenesis. They compact sperm DNA into a highly condensed, stable and inactive complex. This is Protamine-3A from Oncorhynchus mykiss (Rainbow trout).